The primary structure comprises 703 residues: Cycloartenol synthase (703 aa).

PFTB repeat units follow at residues 59 to 103 (IKKA…QLPE) and 106 to 148 (QREI…RLLG). The Proton donor role is filled by Asp-435. 4 PFTB repeats span residues 461–503 (IADG…QNIM), 539–579 (IARG…VASG), 587–628 (IVKA…VNTG), and 645–686 (IERG…KNIF).

It belongs to the terpene cyclase/mutase family.

It catalyses the reaction (S)-2,3-epoxysqualene = cycloartenol. In terms of biological role, converts oxidosqualene to cycloartenol (in vitro). This Dictyostelium discoideum (Social amoeba) protein is Cycloartenol synthase (cas1).